The sequence spans 301 residues: GTPase Era (301 aa).

The region spanning 6 to 173 (KSGFVAIVGR…LEQTNANLEI (168 aa)) is the Era-type G domain. The segment at 14–21 (GRPNVGKS) is G1. Residue 14–21 (GRPNVGKS) coordinates GTP. The segment at 40–44 (QTTRN) is G2. The G3 stretch occupies residues 61-64 (DTPG). GTP-binding positions include 61 to 65 (DTPGI) and 123 to 126 (NKID). A G4 region spans residues 123–126 (NKID). Residues 152–154 (ISA) form a G5 region. The KH type-2 domain maps to 204 to 282 (TREEVPHSVA…FLEIWVKVQK (79 aa)).

It belongs to the TRAFAC class TrmE-Era-EngA-EngB-Septin-like GTPase superfamily. Era GTPase family. As to quaternary structure, monomer.

It localises to the cytoplasm. The protein resides in the cell membrane. An essential GTPase that binds both GDP and GTP, with rapid nucleotide exchange. Plays a role in 16S rRNA processing and 30S ribosomal subunit biogenesis and possibly also in cell cycle regulation and energy metabolism. This Listeria welshimeri serovar 6b (strain ATCC 35897 / DSM 20650 / CCUG 15529 / CIP 8149 / NCTC 11857 / SLCC 5334 / V8) protein is GTPase Era.